We begin with the raw amino-acid sequence, 311 residues long: Glycine--tRNA ligase alpha subunit (311 aa).

This sequence belongs to the class-II aminoacyl-tRNA synthetase family. Tetramer of two alpha and two beta subunits.

Its subcellular location is the cytoplasm. It catalyses the reaction tRNA(Gly) + glycine + ATP = glycyl-tRNA(Gly) + AMP + diphosphate. The protein is Glycine--tRNA ligase alpha subunit of Brucella anthropi (strain ATCC 49188 / DSM 6882 / CCUG 24695 / JCM 21032 / LMG 3331 / NBRC 15819 / NCTC 12168 / Alc 37) (Ochrobactrum anthropi).